A 70-amino-acid polypeptide reads, in one-letter code: Protein SlyX homolog (70 aa).

Residues 51–70 (RMREAEANRPGPTNEPPPHY) are disordered.

This sequence belongs to the SlyX family.

This Nitrobacter hamburgensis (strain DSM 10229 / NCIMB 13809 / X14) protein is Protein SlyX homolog.